Here is a 94-residue protein sequence, read N- to C-terminus: Transcription factor CPC (94 aa).

The S1, required for cell-to-cell movements stretch occupies residues 1–10 (MFRSDKAEKM). The segment covering 1 to 11 (MFRSDKAEKMD) has biased composition (basic and acidic residues). The disordered stretch occupies residues 1–25 (MFRSDKAEKMDKRRRRQSKAKASCS). The region spanning 30–80 (SIEWEAVKMSEEEEDLISRMYKLVGDRWELIAGRIPGRTPEEIERYWLMKH) is the Myb-like domain. Residues 76–79 (WLMK) are S2, required for cell-to-cell movements and nuclear localization.

Interacts with GL3 and BHLH2. Interacts with SIEL. In terms of tissue distribution, expressed in trichomes and in young developing leaves, as well as in root hair and stele cells (pericycle and vascular tissues). Expressed in epidermal root hairless cells (atrichoblasts) and moves to root hair cells (trichoblasts) by a cell-to-cell movement through plasmodesmata (at protein level).

It is found in the nucleus. Its function is as follows. Transcription factor. Determines the fate of epidermal cell differentiation. Represses trichome development by lateral inhibition. Together with GL3 or BHLH2, promotes the formation of hair developing cells (H position) in root epidermis, probably by inhibiting non-hair cell formation. Represses the expression of GL2 and WER in H cells. Positively regulates stomatal formation in the hypocotyl. This chain is Transcription factor CPC (CPC), found in Arabidopsis thaliana (Mouse-ear cress).